The primary structure comprises 85 residues: Large ribosomal subunit protein bL27 (85 aa).

Positions 1 to 20 (MAHKKAGGSTRNGRDSEAKR) are disordered.

The protein belongs to the bacterial ribosomal protein bL27 family.

This Escherichia coli O139:H28 (strain E24377A / ETEC) protein is Large ribosomal subunit protein bL27.